The following is a 75-amino-acid chain: Small ribosomal subunit protein bS18 (75 aa).

Belongs to the bacterial ribosomal protein bS18 family. In terms of assembly, part of the 30S ribosomal subunit. Forms a tight heterodimer with protein bS6.

Binds as a heterodimer with protein bS6 to the central domain of the 16S rRNA, where it helps stabilize the platform of the 30S subunit. This is Small ribosomal subunit protein bS18 from Buchnera aphidicola subsp. Acyrthosiphon pisum (strain 5A).